Reading from the N-terminus, the 92-residue chain is Small ribosomal subunit protein uS19 (92 aa).

This sequence belongs to the universal ribosomal protein uS19 family.

In terms of biological role, protein S19 forms a complex with S13 that binds strongly to the 16S ribosomal RNA. In Bifidobacterium animalis subsp. lactis (strain AD011), this protein is Small ribosomal subunit protein uS19.